The following is a 209-amino-acid chain: Glutathione S-transferase D1 (209 aa).

The region spanning Met-1–Asp-81 is the GST N-terminal domain. Residues Ser-10, His-51 to Ile-53, and Glu-65 to Arg-67 each bind glutathione. The region spanning Cys-87–Phe-208 is the GST C-terminal domain.

It belongs to the GST superfamily. Delta family. As to quaternary structure, homodimer.

The catalysed reaction is RX + glutathione = an S-substituted glutathione + a halide anion + H(+). The enzyme catalyses 1,1,1-trichloro-2,2-bis(4-chlorophenyl)ethane = 1,1-dichloro-2,2-bis(4-chlorophenyl)ethylene + chloride + H(+). Functionally, conjugation of reduced glutathione to a wide number of exogenous and endogenous hydrophobic electrophiles. Has DDT dehydrochlorinase activity. May be involved in detoxification. This chain is Glutathione S-transferase D1, found in Drosophila melanogaster (Fruit fly).